We begin with the raw amino-acid sequence, 961 residues long: Valine--tRNA ligase (961 aa).

The 'HIGH' region motif lies at 48–58; the sequence is PNVTGSLHMGH. The 'KMSKS' region signature appears at 560–564; it reads KMSKS. K563 is an ATP binding site. The stretch at 892 to 961 forms a coiled coil; sequence FINKDTELAR…QAQFKAIEAL (70 aa).

It belongs to the class-I aminoacyl-tRNA synthetase family. ValS type 1 subfamily. Monomer.

It is found in the cytoplasm. The enzyme catalyses tRNA(Val) + L-valine + ATP = L-valyl-tRNA(Val) + AMP + diphosphate. Its function is as follows. Catalyzes the attachment of valine to tRNA(Val). As ValRS can inadvertently accommodate and process structurally similar amino acids such as threonine, to avoid such errors, it has a 'posttransfer' editing activity that hydrolyzes mischarged Thr-tRNA(Val) in a tRNA-dependent manner. The polypeptide is Valine--tRNA ligase (Haemophilus ducreyi (strain 35000HP / ATCC 700724)).